The primary structure comprises 365 residues: Short-chain dehydrogenase iccH (365 aa).

NADP(+) is bound by residues L16, R52, and D70. N90 carries N-linked (GlcNAc...) asparagine glycosylation. The NADP(+) site is built by N102, Y221, K225, and S260. The active-site Proton donor is Y221. The active-site Lowers pKa of active site Tyr is K225. A helical transmembrane segment spans residues 267-287 (IWVMFLLMKFVLPLLAPLAVW). N-linked (GlcNAc...) asparagine glycans are attached at residues N291 and N324.

The protein belongs to the short-chain dehydrogenases/reductases (SDR) family.

Its subcellular location is the membrane. The protein operates within mycotoxin biosynthesis. NADH-dependent flavin oxidoreductase; part of the gene cluster that mediates the biosynthesis of ilicicolin H, a 4-hydroxy-2-pyridonealkaloid that has potent and broad antifungal activities by inhibiting the mitochondrial respiration chain. IccA to iccE are sufficient for ilicicolin H biosynthesis and the roles of the remaining enzymes, iccF, iccG and iccH within the pathway have still to be determined. The biosynthesis of ilicicolin H starts with formation of the tetramic acid by the hybrid PKS-NRPS synthetase iccA with the partnering trans-enoyl reductase iccB since iccA lacks a designated enoylreductase (ER) domain. The cytochrome P450 monooxygenase iccC then catalyzes the ring expansion of the tetramate to the acyclic 2-pyridone. The pericyclase iccD further converts the acyclic 2-pyridone into 8-epi-ilicicolin H. Finally, the epimerase iccE converts 8-epi-ilicicolin H into ilicicolin H via epimerizationd. This is Short-chain dehydrogenase iccH from Talaromyces variabilis (Penicillium variabile).